A 387-amino-acid polypeptide reads, in one-letter code: Succinate--CoA ligase [ADP-forming] subunit beta (387 aa).

The 236-residue stretch at 9-244 folds into the ATP-grasp domain; the sequence is KQLFAEYGIP…KTQEDETEVL (236 aa). Residues K46, 53–55, G102, and E107 each bind ATP; that span reads GRG. Residues N199 and D213 each coordinate Mg(2+). Substrate is bound by residues N264 and 321 to 323; that span reads GIV.

This sequence belongs to the succinate/malate CoA ligase beta subunit family. Heterotetramer of two alpha and two beta subunits. Requires Mg(2+) as cofactor.

It carries out the reaction succinate + ATP + CoA = succinyl-CoA + ADP + phosphate. The catalysed reaction is GTP + succinate + CoA = succinyl-CoA + GDP + phosphate. Its pathway is carbohydrate metabolism; tricarboxylic acid cycle; succinate from succinyl-CoA (ligase route): step 1/1. In terms of biological role, succinyl-CoA synthetase functions in the citric acid cycle (TCA), coupling the hydrolysis of succinyl-CoA to the synthesis of either ATP or GTP and thus represents the only step of substrate-level phosphorylation in the TCA. The beta subunit provides nucleotide specificity of the enzyme and binds the substrate succinate, while the binding sites for coenzyme A and phosphate are found in the alpha subunit. This chain is Succinate--CoA ligase [ADP-forming] subunit beta, found in Xylella fastidiosa (strain M23).